Reading from the N-terminus, the 408-residue chain is UPF0761 membrane protein NMCC_0461 (408 aa).

The next 6 membrane-spanning stretches (helical) occupy residues 43-63, 100-120, 139-159, 176-196, 210-230, and 248-268; these read LLALVPVLTVMVAVASIFPVF, LTAIGSVMLVVTSLMLIRTID, FLVYWALLTFGPLSLGVGISF, WSGALRTAATLTFMTLLLWGL, AFVGALATAFCLETARSLFTW, and VPFFLLWLNLLWTLVLGGAVL.

The protein belongs to the UPF0761 family.

It localises to the cell inner membrane. The polypeptide is UPF0761 membrane protein NMCC_0461 (Neisseria meningitidis serogroup C (strain 053442)).